Consider the following 112-residue polypeptide: Transmembrane protein 14 homolog (112 aa).

Residues V3–A23 traverse the membrane as a helical segment.

It belongs to the TMEM14 family.

It localises to the membrane. The protein is Transmembrane protein 14 homolog of Drosophila melanogaster (Fruit fly).